The sequence spans 442 residues: PTS system oligo-beta-mannoside-specific EIIC component (442 aa).

The PTS EIIC type-3 domain maps to 5 to 411 (ISQFLVPIAG…LIVFVIWFPF (407 aa)). 11 helical membrane passes run 28–48 (AFML…LTNL), 67–87 (FGIA…FGIG), 97–117 (EAVF…PFII), 138–157 (GMFL…RRIV), 177–197 (FAAL…NVMV), 205–225 (MHDV…SGII), 228–248 (LIAV…QIII), 286–306 (TVGM…LIFM), 329–349 (PIIF…WVLA), 365–385 (LVPP…INGI), and 391–411 (IMGG…WFPF).

The protein resides in the cell membrane. Functionally, the phosphoenolpyruvate-dependent sugar phosphotransferase system (sugar PTS), a major carbohydrate active transport system, catalyzes the phosphorylation of incoming sugar substrates concomitantly with their translocation across the cell membrane. The enzyme II GmuABC PTS system is involved in the transport of oligo-glucomannans such as cellobiose or mannobiose. This is PTS system oligo-beta-mannoside-specific EIIC component from Bacillus subtilis (strain 168).